The primary structure comprises 536 residues: Ribulokinase (536 aa).

The protein belongs to the ribulokinase family.

The enzyme catalyses D-ribulose + ATP = D-ribulose 5-phosphate + ADP + H(+). It catalyses the reaction L-ribulose + ATP = L-ribulose 5-phosphate + ADP + H(+). It participates in carbohydrate degradation; L-arabinose degradation via L-ribulose; D-xylulose 5-phosphate from L-arabinose (bacterial route): step 2/3. The protein is Ribulokinase of Staphylococcus epidermidis (strain ATCC 12228 / FDA PCI 1200).